The following is an 87-amino-acid chain: Small ribosomal subunit protein uS17 (87 aa).

It belongs to the universal ribosomal protein uS17 family. Part of the 30S ribosomal subunit.

One of the primary rRNA binding proteins, it binds specifically to the 5'-end of 16S ribosomal RNA. The polypeptide is Small ribosomal subunit protein uS17 (Bacillus velezensis (strain DSM 23117 / BGSC 10A6 / LMG 26770 / FZB42) (Bacillus amyloliquefaciens subsp. plantarum)).